Here is a 287-residue protein sequence, read N- to C-terminus: Ciliary microtubule inner protein 6 (287 aa).

Composition is skewed to basic and acidic residues over residues 1–15 and 25–34; these read MEEK…KIED and EEIKHEEKPG. The tract at residues 1 to 42 is disordered; it reads MEEKEDKHQQHKIEDAAITYVSENEEIKHEEKPGKSIHHSKS. The interval 128-160 is mn 1; it reads GIVPLASPGTSAELQNNFIEYISFIHQYDARKT. The segment at 179–287 is disordered; it reads KPGSRPTVPK…PLNPPIKKSE (109 aa). 2 stretches are compositionally biased toward basic and acidic residues: residues 203 to 212 and 232 to 245; these read EQSKKTEKGN and LEPK…DVRQ. Positions 213–246 are mn 2; that stretch reads SAESRMISPGLCQQNSQELLEPKTHLSETDVRQA.

It is found in the cell projection. Its subcellular location is the cilium. This is Ciliary microtubule inner protein 6 from Homo sapiens (Human).